We begin with the raw amino-acid sequence, 457 residues long: MKIHFVGIGGIGMSAVALHEFLNGNDVYGSNIEETERTAYLRKLGIPIFVPHSADNWYDPDLVIKTPAVRDDNPEIVRARMERVPIENRLHYFRDILKREKKEEFAVTGTDGKTTTTAMVAHVLKHLKKSPTVFLGGIMDSLEHGNYEKGNGPVVYELDESEEFFSEFSPNYLIITNARGDHLENYGNSLSRYRSAFEKISRNTDLVVTFAEDELTSHLGDVTFGVKKGTYTLEMRSASRAEQKAVVEKNGKRYLELKLKVPGFHNVLNALAVIALFDSLGYDLAPVLEALEEFRGVHRRFSIAFHDPETNIYVIDDYAHTPDEIRNLLQTAKEVFENEKIVVIFQPHRYSRLEREDGNFAKALQLADEVVVTEVYDAFEEKKNGVSGKMIWDSLKSLGKEAYFVEKLPELEKVIPVSENTVFLFVGAGDIIYSSRRFVERYQSSKSSPSRVLGSNK.

109-115 (GTDGKTT) is a binding site for ATP.

Belongs to the MurCDEF family.

The protein localises to the cytoplasm. It carries out the reaction UDP-N-acetyl-alpha-D-muramate + L-alanine + ATP = UDP-N-acetyl-alpha-D-muramoyl-L-alanine + ADP + phosphate + H(+). The protein operates within cell wall biogenesis; peptidoglycan biosynthesis. Functionally, cell wall formation. This chain is UDP-N-acetylmuramate--L-alanine ligase, found in Thermotoga sp. (strain RQ2).